A 317-amino-acid chain; its full sequence is Putative GTPase PH0274 (317 aa).

Residues 54–62 (GPPGAGKST), D196, and 231–233 (VGT) contribute to the GTP site.

Belongs to the SIMIBI class G3E GTPase family. ArgK/MeaB subfamily.

Functionally, may have GTPase activity. May also bind and hydrolyze ATP. May function as chaperone. In Pyrococcus horikoshii (strain ATCC 700860 / DSM 12428 / JCM 9974 / NBRC 100139 / OT-3), this protein is Putative GTPase PH0274.